The chain runs to 729 residues: Phosphoribosylformylglycinamidine synthase subunit PurL (729 aa).

His-54 is a catalytic residue. The ATP site is built by Tyr-57 and Lys-96. Mg(2+) is bound at residue Glu-98. Substrate-binding positions include 99 to 102 (SHNH) and Arg-121. His-100 serves as the catalytic Proton acceptor. Asp-122 contacts Mg(2+). Gln-245 provides a ligand contact to substrate. Residue Asp-273 participates in Mg(2+) binding. Residue 317 to 319 (ETQ) coordinates substrate. Asp-495 and Gly-532 together coordinate ATP. Mg(2+) is bound at residue Asn-533. A substrate-binding site is contributed by Ser-535.

It belongs to the FGAMS family. Monomer. Part of the FGAM synthase complex composed of 1 PurL, 1 PurQ and 2 PurS subunits.

Its subcellular location is the cytoplasm. It carries out the reaction N(2)-formyl-N(1)-(5-phospho-beta-D-ribosyl)glycinamide + L-glutamine + ATP + H2O = 2-formamido-N(1)-(5-O-phospho-beta-D-ribosyl)acetamidine + L-glutamate + ADP + phosphate + H(+). It participates in purine metabolism; IMP biosynthesis via de novo pathway; 5-amino-1-(5-phospho-D-ribosyl)imidazole from N(2)-formyl-N(1)-(5-phospho-D-ribosyl)glycinamide: step 1/2. Part of the phosphoribosylformylglycinamidine synthase complex involved in the purines biosynthetic pathway. Catalyzes the ATP-dependent conversion of formylglycinamide ribonucleotide (FGAR) and glutamine to yield formylglycinamidine ribonucleotide (FGAM) and glutamate. The FGAM synthase complex is composed of three subunits. PurQ produces an ammonia molecule by converting glutamine to glutamate. PurL transfers the ammonia molecule to FGAR to form FGAM in an ATP-dependent manner. PurS interacts with PurQ and PurL and is thought to assist in the transfer of the ammonia molecule from PurQ to PurL. The chain is Phosphoribosylformylglycinamidine synthase subunit PurL from Staphylococcus epidermidis (strain ATCC 12228 / FDA PCI 1200).